The chain runs to 297 residues: 4-hydroxy-tetrahydrodipicolinate synthase (297 aa).

Residue threonine 50 coordinates pyruvate. Catalysis depends on tyrosine 138, which acts as the Proton donor/acceptor. Lysine 166 serves as the catalytic Schiff-base intermediate with substrate. Residue isoleucine 208 participates in pyruvate binding.

Belongs to the DapA family. In terms of assembly, homotetramer; dimer of dimers.

The protein resides in the cytoplasm. The enzyme catalyses L-aspartate 4-semialdehyde + pyruvate = (2S,4S)-4-hydroxy-2,3,4,5-tetrahydrodipicolinate + H2O + H(+). It functions in the pathway amino-acid biosynthesis; L-lysine biosynthesis via DAP pathway; (S)-tetrahydrodipicolinate from L-aspartate: step 3/4. Catalyzes the condensation of (S)-aspartate-beta-semialdehyde [(S)-ASA] and pyruvate to 4-hydroxy-tetrahydrodipicolinate (HTPA). The protein is 4-hydroxy-tetrahydrodipicolinate synthase of Gluconobacter oxydans (strain 621H) (Gluconobacter suboxydans).